The chain runs to 176 residues: 3-hydroxydecanoyl-[acyl-carrier-protein] dehydratase (176 aa).

Residue histidine 71 is part of the active site.

This sequence belongs to the thioester dehydratase family. FabA subfamily. In terms of assembly, homodimer.

The protein localises to the cytoplasm. The catalysed reaction is a (3R)-hydroxyacyl-[ACP] = a (2E)-enoyl-[ACP] + H2O. It carries out the reaction (3R)-hydroxydecanoyl-[ACP] = (2E)-decenoyl-[ACP] + H2O. It catalyses the reaction (2E)-decenoyl-[ACP] = (3Z)-decenoyl-[ACP]. It participates in lipid metabolism; fatty acid biosynthesis. In terms of biological role, necessary for the introduction of cis unsaturation into fatty acids. Catalyzes the dehydration of (3R)-3-hydroxydecanoyl-ACP to E-(2)-decenoyl-ACP and then its isomerization to Z-(3)-decenoyl-ACP. Can catalyze the dehydratase reaction for beta-hydroxyacyl-ACPs with saturated chain lengths up to 16:0, being most active on intermediate chain length. This Rhodopseudomonas palustris (strain HaA2) protein is 3-hydroxydecanoyl-[acyl-carrier-protein] dehydratase.